Reading from the N-terminus, the 413-residue chain is Serine hydroxymethyltransferase (413 aa).

Residues Leu-117 and 121-123 each bind (6S)-5,6,7,8-tetrahydrofolate; that span reads GHL. The residue at position 226 (Lys-226) is an N6-(pyridoxal phosphate)lysine. (6S)-5,6,7,8-tetrahydrofolate contacts are provided by residues Glu-239 and 349 to 351; that span reads SPF.

The protein belongs to the SHMT family. Homodimer. It depends on pyridoxal 5'-phosphate as a cofactor.

It is found in the cytoplasm. It catalyses the reaction (6R)-5,10-methylene-5,6,7,8-tetrahydrofolate + glycine + H2O = (6S)-5,6,7,8-tetrahydrofolate + L-serine. It participates in one-carbon metabolism; tetrahydrofolate interconversion. It functions in the pathway amino-acid biosynthesis; glycine biosynthesis; glycine from L-serine: step 1/1. In terms of biological role, catalyzes the reversible interconversion of serine and glycine with tetrahydrofolate (THF) serving as the one-carbon carrier. This reaction serves as the major source of one-carbon groups required for the biosynthesis of purines, thymidylate, methionine, and other important biomolecules. Also exhibits THF-independent aldolase activity toward beta-hydroxyamino acids, producing glycine and aldehydes, via a retro-aldol mechanism. The sequence is that of Serine hydroxymethyltransferase from Bacillus cereus (strain AH187).